The primary structure comprises 971 residues: Exportin-2 (971 aa).

An N-acetylmethionine modification is found at Met1. Positions 29 to 102 (AEKFLESVEG…KANIVHLMLS (74 aa)) constitute an Importin N-terminal domain. A Phosphoserine modification is found at Ser112. Residues Lys574 and Lys824 each carry the N6-acetyllysine modification. Ser931 bears the Phosphoserine mark.

The protein belongs to the XPO2/CSE1 family. In terms of assembly, found in a complex with CSE1L/XPO2, Ran and KPNA2. Binds with high affinity to importin-alpha only in the presence of RanGTP. The complex is dissociated by the combined action of RanBP1 and RanGAP1. Interacts with CFTR. In terms of tissue distribution, ubiquitous. Detected in embryos from 5 to 17 dpc. Highly expressed in adult testis, heart, brain, lung, liver, skeletal muscle, spleen and kidney.

Its subcellular location is the cytoplasm. The protein localises to the nucleus. In terms of biological role, export receptor for importin-alpha. Mediates importin-alpha re-export from the nucleus to the cytoplasm after import substrates (cargos) have been released into the nucleoplasm. In the nucleus binds cooperatively to importin-alpha and to the GTPase Ran in its active GTP-bound form. Docking of this trimeric complex to the nuclear pore complex (NPC) is mediated through binding to nucleoporins. Upon transit of a nuclear export complex into the cytoplasm, disassembling of the complex and hydrolysis of Ran-GTP to Ran-GDP (induced by RANBP1 and RANGAP1, respectively) cause release of the importin-alpha from the export receptor. CSE1L/XPO2 then return to the nuclear compartment and mediate another round of transport. The directionality of nuclear export is thought to be conferred by an asymmetric distribution of the GTP- and GDP-bound forms of Ran between the cytoplasm and nucleus. The protein is Exportin-2 (Cse1l) of Mus musculus (Mouse).